A 405-amino-acid polypeptide reads, in one-letter code: NADH-quinone oxidoreductase subunit D (405 aa).

This sequence belongs to the complex I 49 kDa subunit family. As to quaternary structure, NDH-1 is composed of 14 different subunits. Subunits NuoB, C, D, E, F, and G constitute the peripheral sector of the complex.

It is found in the cell inner membrane. The enzyme catalyses a quinone + NADH + 5 H(+)(in) = a quinol + NAD(+) + 4 H(+)(out). Functionally, NDH-1 shuttles electrons from NADH, via FMN and iron-sulfur (Fe-S) centers, to quinones in the respiratory chain. The immediate electron acceptor for the enzyme in this species is believed to be ubiquinone. Couples the redox reaction to proton translocation (for every two electrons transferred, four hydrogen ions are translocated across the cytoplasmic membrane), and thus conserves the redox energy in a proton gradient. This is NADH-quinone oxidoreductase subunit D from Leptospira interrogans serogroup Icterohaemorrhagiae serovar copenhageni (strain Fiocruz L1-130).